A 448-amino-acid polypeptide reads, in one-letter code: Trigger factor (448 aa).

Positions 167 to 253 (GSIVRVDFVE…IKDIKKRDIP (87 aa)) constitute a PPIase FKBP-type domain.

It belongs to the FKBP-type PPIase family. Tig subfamily.

It localises to the cytoplasm. The enzyme catalyses [protein]-peptidylproline (omega=180) = [protein]-peptidylproline (omega=0). Its function is as follows. Involved in protein export. Acts as a chaperone by maintaining the newly synthesized protein in an open conformation. Functions as a peptidyl-prolyl cis-trans isomerase. This Borrelia hermsii (strain HS1 / DAH) protein is Trigger factor.